The following is a 341-amino-acid chain: UDP-glucuronic acid decarboxylase 5 (341 aa).

A disordered region spans residues 1 to 21 (MASSDKQTSPKPPPSPSPLRN). An NAD(+)-binding site is contributed by 60-85 (DNYFTGSKDNLKKWIGHPRFELIRHD). Arg169 contributes to the substrate binding site. The Proton acceptor role is filled by Tyr172. 172–176 (YDEGK) contacts NAD(+). Asn201 serves as a coordination point for substrate. Arg213 is an NAD(+) binding site. Substrate contacts are provided by residues 214-218 (VVSNF), 231-238 (QKPGTQTR), and 298-302 (DPRQR).

Belongs to the NAD(P)-dependent epimerase/dehydratase family. UDP-glucuronic acid decarboxylase subfamily. NAD(+) is required as a cofactor.

It localises to the cytoplasm. It catalyses the reaction UDP-alpha-D-glucuronate + H(+) = UDP-alpha-D-xylose + CO2. The protein operates within nucleotide-sugar biosynthesis; UDP-alpha-D-xylose biosynthesis; UDP-alpha-D-xylose from UDP-alpha-D-glucuronate: step 1/1. In terms of biological role, catalyzes the NAD-dependent decarboxylation of UDP-glucuronic acid to UDP-xylose. Necessary for the biosynthesis of the core tetrasaccharide in glycosaminoglycan biosynthesis. This is UDP-glucuronic acid decarboxylase 5 (UXS5) from Arabidopsis thaliana (Mouse-ear cress).